We begin with the raw amino-acid sequence, 426 residues long: Putative acid phosphatase 1 (426 aa).

The N-terminal stretch at 1-18 (MRVLFYVFPFVIFALSQA) is a signal peptide. Residues 19 to 388 (QLISVHVIFR…HNWTMTTVSW (370 aa)) lie on the Extracellular side of the membrane. The active-site Nucleophile is histidine 29. 2 N-linked (GlcNAc...) asparagine glycosylation sites follow: asparagine 37 and asparagine 145. The cysteines at positions 133 and 369 are disulfide-linked. The active-site Proton donor is aspartate 276. A glycan (N-linked (GlcNAc...) asparagine) is linked at asparagine 380. Residues 389–409 (ILIGISAFLLIILIIMSYLAV) form a helical membrane-spanning segment. At 410-426 (RYKNRSVVTIKKVCLEN) the chain is on the cytoplasmic side.

The protein belongs to the histidine acid phosphatase family.

It is found in the membrane. The enzyme catalyses a phosphate monoester + H2O = an alcohol + phosphate. This chain is Putative acid phosphatase 1, found in Caenorhabditis briggsae.